The primary structure comprises 455 residues: UPF0053 protein MT1890 (455 aa).

Residues 2-205 (NLTDTVATIL…ARSGALDDAT (204 aa)) enclose the CNNM transmembrane domain. The next 4 membrane-spanning stretches (helical) occupy residues 6 to 26 (TVATILAILALTAGTGVFVAA), 68 to 88 (LGISITTLATGYLTEPLVAEL), 106 to 126 (LITFFALVIVTSLSMVFGELV), and 148 to 168 (LFSLLLTPAIRLTNGAANWIV). 2 CBS domains span residues 224 to 285 (MTPR…AHTL) and 286 to 346 (LTTV…VRDE).

It belongs to the UPF0053 family.

It localises to the cell membrane. In Mycobacterium tuberculosis (strain CDC 1551 / Oshkosh), this protein is UPF0053 protein MT1890.